Here is a 220-residue protein sequence, read N- to C-terminus: dITP/XTP pyrophosphatase (220 aa).

13–18 (SHNAGK) contributes to the substrate binding site. Aspartate 45 and aspartate 74 together coordinate Mg(2+). Residue aspartate 74 is the Proton acceptor of the active site. Substrate contacts are provided by residues serine 75, 163 to 166 (FGYD), lysine 186, and 199 to 200 (HR).

Belongs to the HAM1 NTPase family. As to quaternary structure, homodimer. Mg(2+) serves as cofactor.

It carries out the reaction XTP + H2O = XMP + diphosphate + H(+). The catalysed reaction is dITP + H2O = dIMP + diphosphate + H(+). The enzyme catalyses ITP + H2O = IMP + diphosphate + H(+). Its function is as follows. Pyrophosphatase that catalyzes the hydrolysis of nucleoside triphosphates to their monophosphate derivatives, with a high preference for the non-canonical purine nucleotides XTP (xanthosine triphosphate), dITP (deoxyinosine triphosphate) and ITP. Seems to function as a house-cleaning enzyme that removes non-canonical purine nucleotides from the nucleotide pool, thus preventing their incorporation into DNA/RNA and avoiding chromosomal lesions. The protein is dITP/XTP pyrophosphatase of Mesorhizobium japonicum (strain LMG 29417 / CECT 9101 / MAFF 303099) (Mesorhizobium loti (strain MAFF 303099)).